The following is a 226-amino-acid chain: Deoxyribose-phosphate aldolase (226 aa).

Asp-95 functions as the Proton donor/acceptor in the catalytic mechanism. Catalysis depends on Lys-157, which acts as the Schiff-base intermediate with acetaldehyde. Catalysis depends on Lys-186, which acts as the Proton donor/acceptor.

This sequence belongs to the DeoC/FbaB aldolase family. DeoC type 1 subfamily.

It is found in the cytoplasm. It catalyses the reaction 2-deoxy-D-ribose 5-phosphate = D-glyceraldehyde 3-phosphate + acetaldehyde. The protein operates within carbohydrate degradation; 2-deoxy-D-ribose 1-phosphate degradation; D-glyceraldehyde 3-phosphate and acetaldehyde from 2-deoxy-alpha-D-ribose 1-phosphate: step 2/2. Its activity is regulated as follows. Partially inhibited by acetaldehyde. After incubation for 2, 4 and 6 hours in 300 mM acetaldehyde at 25 degrees Celsius, retains approximately 61.32%, 42.33% and 34.73% of the initial 2-deoxy-D-ribose-5-phosphate (DR5P) cleavage activity, respectively. In terms of biological role, catalyzes a reversible aldol reaction between acetaldehyde and D-glyceraldehyde 3-phosphate to generate 2-deoxy-D-ribose 5-phosphate. Functionally, in vitro, DERA can catalyze the aldol condensation of chloroacetaldehyde (CHAD) and acetaldehyde (ACD), yielding (S)-4-chloro-3-hydroxybutanal ((S)-CHB), which can combine with another aldehyde to form (3R,5S)-6-chloro-2,4,6-trideoxyhexapyranose (CTeHP), a key intermediate for statin drugs. The protein is Deoxyribose-phosphate aldolase of Pseudomonas syringae pv. syringae (strain B728a).